Here is a 65-residue protein sequence, read N- to C-terminus: Large ribosomal subunit protein bL35 (65 aa).

Composition is skewed to basic residues over residues 1–11 (MPKIKTRRSAA) and 21–43 (KFKR…RKMR). The interval 1–65 (MPKIKTRRSA…KAVRRMLPNG (65 aa)) is disordered.

The protein belongs to the bacterial ribosomal protein bL35 family.

The protein is Large ribosomal subunit protein bL35 of Desulfovibrio desulfuricans (strain ATCC 27774 / DSM 6949 / MB).